Reading from the N-terminus, the 553-residue chain is CTP synthase (553 aa).

Residues 1-270 (MTKFVFVTGG…DRIICEELRI (270 aa)) are amidoligase domain. Ser-13 lines the CTP pocket. Ser-13 provides a ligand contact to UTP. Residues 14-19 (SLGKGI) and Asp-71 contribute to the ATP site. Asp-71 and Glu-144 together coordinate Mg(2+). CTP-binding positions include 151–153 (DIE), 191–196 (KTKPTQ), and Lys-227. UTP contacts are provided by residues 191–196 (KTKPTQ) and Lys-227. One can recognise a Glutamine amidotransferase type-1 domain in the interval 295 to 547 (TIGMVGKYVD…VEAALAHQQN (253 aa)). Gly-356 contributes to the L-glutamine binding site. Residue Cys-383 is the Nucleophile; for glutamine hydrolysis of the active site. L-glutamine contacts are provided by residues 384–387 (LGMQ), Glu-407, and Arg-473. Residues His-520 and Glu-522 contribute to the active site.

Belongs to the CTP synthase family. Homotetramer.

It carries out the reaction UTP + L-glutamine + ATP + H2O = CTP + L-glutamate + ADP + phosphate + 2 H(+). It catalyses the reaction L-glutamine + H2O = L-glutamate + NH4(+). The enzyme catalyses UTP + NH4(+) + ATP = CTP + ADP + phosphate + 2 H(+). The protein operates within pyrimidine metabolism; CTP biosynthesis via de novo pathway; CTP from UDP: step 2/2. Its activity is regulated as follows. Allosterically activated by GTP, when glutamine is the substrate; GTP has no effect on the reaction when ammonia is the substrate. The allosteric effector GTP functions by stabilizing the protein conformation that binds the tetrahedral intermediate(s) formed during glutamine hydrolysis. Inhibited by the product CTP, via allosteric rather than competitive inhibition. Catalyzes the ATP-dependent amination of UTP to CTP with either L-glutamine or ammonia as the source of nitrogen. Regulates intracellular CTP levels through interactions with the four ribonucleotide triphosphates. This Ralstonia pickettii (strain 12J) protein is CTP synthase.